An 869-amino-acid polypeptide reads, in one-letter code: Speckle targeted PIP5K1A-regulated poly(A) polymerase (869 aa).

Residues 16–46 (FRCCLCDVTTANRPSLDAHLKGRKHRDLVQL) form a Matrin-type zinc finger. The 73-residue stretch at 56–128 (RSVFVSGFPR…HGLRVRPREQ (73 aa)) folds into the RRM domain. Residues 114-144 (HSLGGHGLRVRPREQKEFQSPASKSPKGVDS) form a disordered region. S205 lines the ATP pocket. Residues D216 and D218 each coordinate Mg(2+). D216 and D218 together coordinate UTP. 2 disordered regions span residues 226–247 (MEET…LDSA) and 259–335 (CTPA…ASKD). 2 stretches are compositionally biased toward polar residues: residues 266–276 (DSLSPTSVQES) and 283–299 (TPSS…LGSD). The segment covering 314 to 335 (QEDRKEGKQGKELELAEEASKD) has biased composition (basic and acidic residues). ATP is bound at residue N395. N395, R417, Y435, and H552 together coordinate UTP. The PAP-associated domain maps to 494–552 (LSSLLAQFFSCVSCLDLSGSLLSLREGRPLMVAEGLPSDLWEGLRLGPMNLQDPFDLSH). A KA1; binds the bulging loops of U6 snRNA but is dispensable for terminal uridylyltransferase activity region spans residues 601-869 (SSPSSLLSAK…IPQALKNLLK (269 aa)). Disordered stretches follow at residues 640–689 (QGTK…DHSE), 735–757 (MKPE…HPSS), 775–796 (ARRR…TGAE), and 803–822 (RVTQ…PGEP). The span at 671–689 (KSFEEGKEEPQGCAGDHSE) shows a compositional bias: basic and acidic residues. 2 positions are modified to phosphoserine: S688 and S744.

It belongs to the DNA polymerase type-B-like family. Associates with the cleavage and polyadenylation specificity factor (CPSF) complex. Interacts with CPSF1 and CPSF3; the interaction is direct. Interacts with PIP5K1A. It depends on Mg(2+) as a cofactor. Requires Mn(2+) as cofactor. In terms of processing, phosphorylated by CK1 in the proline-rich (Pro-rich) region.

It localises to the nucleus. It is found in the nucleolus. The protein resides in the nucleus speckle. The catalysed reaction is RNA(n) + UTP = RNA(n)-3'-uridine ribonucleotide + diphosphate. It carries out the reaction RNA(n) + ATP = RNA(n)-3'-adenine ribonucleotide + diphosphate. Adenylyltransferase activity is specifically phosphatidylinositol 4,5-bisphosphate (PtdIns(4,5)P2). Functionally, poly(A) polymerase that creates the 3'-poly(A) tail of specific pre-mRNAs. Localizes to nuclear speckles together with PIP5K1A and mediates polyadenylation of a select set of mRNAs, such as HMOX1. In addition to polyadenylation, it is also required for the 3'-end cleavage of pre-mRNAs: binds to the 3'UTR of targeted pre-mRNAs and promotes the recruitment and assembly of the CPSF complex on the 3'UTR of pre-mRNAs. In addition to adenylyltransferase activity, also has uridylyltransferase activity. However, the ATP ratio is higher than UTP in cells, suggesting that it functions primarily as a poly(A) polymerase. Acts as a specific terminal uridylyltransferase for U6 snRNA in vitro: responsible for a controlled elongation reaction that results in the restoration of the four 3'-terminal UMP-residues found in newly transcribed U6 snRNA. Not involved in replication-dependent histone mRNA degradation. In Mus musculus (Mouse), this protein is Speckle targeted PIP5K1A-regulated poly(A) polymerase (Tut1).